We begin with the raw amino-acid sequence, 525 residues long: Probable protein kinase UbiB (525 aa).

Residues 119-501 form the Protein kinase domain; that stretch reads RFDHHPVASA…QRRTNRLLSA (383 aa). ATP is bound by residues 125–133 and K151; that span reads VASASIAQV. D286 functions as the Proton acceptor in the catalytic mechanism. Residues 502–522 form a helical membrane-spanning segment; that stretch reads ALLFIGGFAVGIIATHVLAWL.

This sequence belongs to the ABC1 family. UbiB subfamily.

Its subcellular location is the cell inner membrane. Its pathway is cofactor biosynthesis; ubiquinone biosynthesis [regulation]. In terms of biological role, is probably a protein kinase regulator of UbiI activity which is involved in aerobic coenzyme Q (ubiquinone) biosynthesis. This is Probable protein kinase UbiB from Ralstonia nicotianae (strain ATCC BAA-1114 / GMI1000) (Ralstonia solanacearum).